A 348-amino-acid polypeptide reads, in one-letter code: Protein RecA (348 aa).

An ATP-binding site is contributed by 65-72; that stretch reads GPESSGKT.

It belongs to the RecA family.

The protein resides in the cytoplasm. Functionally, can catalyze the hydrolysis of ATP in the presence of single-stranded DNA, the ATP-dependent uptake of single-stranded DNA by duplex DNA, and the ATP-dependent hybridization of homologous single-stranded DNAs. It interacts with LexA causing its activation and leading to its autocatalytic cleavage. The chain is Protein RecA from Enterococcus faecalis (strain ATCC 700802 / V583).